Reading from the N-terminus, the 64-residue chain is Large ribosomal subunit protein bL33 (64 aa).

The protein belongs to the bacterial ribosomal protein bL33 family.

The polypeptide is Large ribosomal subunit protein bL33 (Microcystis aeruginosa (strain NIES-843 / IAM M-2473)).